We begin with the raw amino-acid sequence, 983 residues long: MASKESKPSRTTRRGMEPPLRETWNQVLQELVKRQQQEEEEQQGLVSGKKKSWVSIDLLGTEGKDIKKVNIWEPCEKWFAQVVWGVLWVLQIVLWGCLMWEVRKGNQCQAEEVIALVSDPGGFQRVQHVETVPVTCVTKNFTQWGCQPEGAYPDPELEYRNISREILEEVYKQDWPWNTYHWPLWQMENMRQWMKENEKEYKERTNKTKEDIDDLVAGRIRGRFCVPYPYALLRCEEWCWYPESINQETGHAEKIKINCTKAKAVSCTEKMSLAAVQRVYWEKEDEESMKFLNIKACNISLRCQDEGKSPGGCVQGYPIPKGAEIIPEAMKYLRGKKSRYGGIKDKNGELKLPLSVRVWVRMANLSGWVNGTPPYWSARINGSTGINGTRWYGIGTLHHLGCNISSNPERGICNFTGELWIGGDKFPYYYTPSWNCSQNWTGHPVWHVFRYLDMTEHMTSRCIQRPKRHNITVGNGTITGNCSVTNWDGCNCTRSGNHLYNSTSGGLLVIICRQNSTITGIMGTNTNWTTMWNIYQNCSRCNNSSLDRTGSGTLGTVNNLKCSLPHRNESNKWTCKSQRDSYIAGRDFWGKVKAKYSCESNLGGLDSMMHQQMLLQRYQVIRVRAYTYGVVEMPQSYMEAQGENKRSRRNLQRKKRGIGLVIVLAIMAIIAAAGAGLGVANAVQQSYTRTAVQSLANATAAQQEVLEASYAMVQHIAKGIRILEARVARVEALVDRMMVYQELDCWHYQHYCVTSTRSEVANYVNWTRFKDNCTWQQWEEEIEQHEGNLSLLLREAALQVHIAQRDARRIPDAWKAIQEAFNWSSWFSWLKYIPWIIMGIVGLMCFRILMCVISMCLQAYKQVKQIRYTQVTVVIEAPVELEEKQKRNGDGTNGCASLERERRTSHRSFIQIWRATWWAWKTSPWRHNWRTMPYITLLPILVIWQWMEENGWNGENQHKKKKERVDCQDREQMPTLENDYVEL.

Positions 1–20 (MASKESKPSRTTRRGMEPPL) are enriched in basic and acidic residues. The segment at 1-22 (MASKESKPSRTTRRGMEPPLRE) is disordered. Positions 1-106 (MASKESKPSR…CLMWEVRKGN (106 aa)) are cleaved as a signal peptide. The Extracellular segment spans residues 107-832 (QCQAEEVIAL…WSSWFSWLKY (726 aa)). Residues Asn140, Asn161, Asn206, Asn258, Asn298, Asn364, Asn381, Asn387, Asn403, Asn414, Asn435, Asn439, Asn470, Asn475, Asn481, Asn491, Asn501, Asn515, Asn527, Asn537, Asn542, Asn543, and Asn568 are each glycosylated (N-linked (GlcNAc...) asparagine; by host). Positions 657 to 677 (GIGLVIVLAIMAIIAAAGAGL) are fusion peptide. A coiled-coil region spans residues 689–739 (RTAVQSLANATAAQQEVLEASYAMVQHIAKGIRILEARVARVEALVDRMMV). Residue Asn697 is glycosylated (N-linked (GlcNAc...) asparagine; by host). The tract at residues 723-739 (LEARVARVEALVDRMMV) is immunosuppression. Asn765, Asn772, Asn788, and Asn822 each carry an N-linked (GlcNAc...) asparagine; by host glycan. Positions 780 to 815 (EEIEQHEGNLSLLLREAALQVHIAQRDARRIPDAWK) form a coiled coil. The helical transmembrane segment at 833 to 853 (IPWIIMGIVGLMCFRILMCVI) threads the bilayer. The Cytoplasmic segment spans residues 854–983 (SMCLQAYKQV…PTLENDYVEL (130 aa)). The S-palmitoyl cysteine; by host moiety is linked to residue Cys856.

The mature envelope protein (Env) consists of a trimer of SU-TM heterodimers attached by noncovalent interactions or by a labile interchain disulfide bond. In terms of processing, specific enzymatic cleavages in vivo yield mature proteins. Envelope glycoproteins are synthesized as an inactive precursor that is N-glycosylated and processed likely by host cell furin or by a furin-like protease in the Golgi to yield the mature SU and TM proteins. The cleavage site between SU and TM requires the minimal sequence [KR]-X-[KR]-R. Post-translationally, the transmembrane protein is palmitoylated.

It localises to the virion membrane. Its subcellular location is the host cell membrane. Its function is as follows. The surface protein (SU) attaches the virus to the host cell by binding to its receptor. This interaction triggers the refolding of the transmembrane protein (TM) and is thought to activate its fusogenic potential by unmasking its fusion peptide. Fusion occurs at the host cell plasma membrane. The transmembrane protein (TM) acts as a class I viral fusion protein. Under the current model, the protein has at least 3 conformational states: pre-fusion native state, pre-hairpin intermediate state, and post-fusion hairpin state. During viral and target cell membrane fusion, the coiled coil regions (heptad repeats) assume a trimer-of-hairpins structure, positioning the fusion peptide in close proximity to the C-terminal region of the ectodomain. The formation of this structure appears to drive apposition and subsequent fusion of viral and target cell membranes. Membranes fusion leads to delivery of the nucleocapsid into the cytoplasm. The sequence is that of Envelope glycoprotein gp160 (env) from Maedi visna virus (strain KV1772) (MVV).